Consider the following 295-residue polypeptide: 4-hydroxy-tetrahydrodipicolinate synthase (295 aa).

Thr48 is a binding site for pyruvate. Tyr135 functions as the Proton donor/acceptor in the catalytic mechanism. Lys163 functions as the Schiff-base intermediate with substrate in the catalytic mechanism. Val204 is a pyruvate binding site.

Belongs to the DapA family. Homotetramer; dimer of dimers.

Its subcellular location is the cytoplasm. The catalysed reaction is L-aspartate 4-semialdehyde + pyruvate = (2S,4S)-4-hydroxy-2,3,4,5-tetrahydrodipicolinate + H2O + H(+). It functions in the pathway amino-acid biosynthesis; L-lysine biosynthesis via DAP pathway; (S)-tetrahydrodipicolinate from L-aspartate: step 3/4. In terms of biological role, catalyzes the condensation of (S)-aspartate-beta-semialdehyde [(S)-ASA] and pyruvate to 4-hydroxy-tetrahydrodipicolinate (HTPA). This chain is 4-hydroxy-tetrahydrodipicolinate synthase, found in Francisella tularensis subsp. novicida (strain U112).